The following is a 688-amino-acid chain: Methionine--tRNA ligase (688 aa).

A 'HIGH' region motif is present at residues 13 to 23; the sequence is PYANGPIHIGH. Residues Cys-144, Cys-147, Cys-157, and Cys-160 each contribute to the Zn(2+) site. Positions 334–338 match the 'KMSKS' region motif; sequence KMSKS. Lys-337 contributes to the ATP binding site. Residues 582-688 enclose the tRNA-binding domain; that stretch reads DFAKIDLRVA…AGAVPGMRVR (107 aa).

It belongs to the class-I aminoacyl-tRNA synthetase family. MetG type 1 subfamily. In terms of assembly, homodimer. The cofactor is Zn(2+).

The protein localises to the cytoplasm. It carries out the reaction tRNA(Met) + L-methionine + ATP = L-methionyl-tRNA(Met) + AMP + diphosphate. Is required not only for elongation of protein synthesis but also for the initiation of all mRNA translation through initiator tRNA(fMet) aminoacylation. The protein is Methionine--tRNA ligase of Ralstonia nicotianae (strain ATCC BAA-1114 / GMI1000) (Ralstonia solanacearum).